The primary structure comprises 208 residues: Phosphoheptose isomerase (208 aa).

The 163-residue stretch at Met38–Pro200 folds into the SIS domain. Residue Asn53 to Gly55 participates in substrate binding. Positions 62 and 66 each coordinate Zn(2+). Substrate contacts are provided by residues Glu66, Asn95–Asp96, Ser121–Ser123, Ser126, and Gln173. Residues Gln173 and His181 each coordinate Zn(2+).

It belongs to the SIS family. GmhA subfamily. Homotetramer. The cofactor is Zn(2+).

The protein localises to the cytoplasm. The catalysed reaction is 2 D-sedoheptulose 7-phosphate = D-glycero-alpha-D-manno-heptose 7-phosphate + D-glycero-beta-D-manno-heptose 7-phosphate. It functions in the pathway carbohydrate biosynthesis; D-glycero-D-manno-heptose 7-phosphate biosynthesis; D-glycero-alpha-D-manno-heptose 7-phosphate and D-glycero-beta-D-manno-heptose 7-phosphate from sedoheptulose 7-phosphate: step 1/1. Functionally, catalyzes the isomerization of sedoheptulose 7-phosphate in D-glycero-D-manno-heptose 7-phosphate. This is Phosphoheptose isomerase from Nitratidesulfovibrio vulgaris (strain DSM 19637 / Miyazaki F) (Desulfovibrio vulgaris).